Reading from the N-terminus, the 125-residue chain is Large ribosomal subunit protein bL12 (125 aa).

It belongs to the bacterial ribosomal protein bL12 family. In terms of assembly, homodimer. Part of the ribosomal stalk of the 50S ribosomal subunit. Forms a multimeric L10(L12)X complex, where L10 forms an elongated spine to which 2 to 4 L12 dimers bind in a sequential fashion. Binds GTP-bound translation factors.

Its function is as follows. Forms part of the ribosomal stalk which helps the ribosome interact with GTP-bound translation factors. Is thus essential for accurate translation. This chain is Large ribosomal subunit protein bL12, found in Syntrophomonas wolfei subsp. wolfei (strain DSM 2245B / Goettingen).